Reading from the N-terminus, the 89-residue chain is Small ribosomal subunit protein uS15 (89 aa).

This sequence belongs to the universal ribosomal protein uS15 family. In terms of assembly, part of the 30S ribosomal subunit. Forms a bridge to the 50S subunit in the 70S ribosome, contacting the 23S rRNA.

Functionally, one of the primary rRNA binding proteins, it binds directly to 16S rRNA where it helps nucleate assembly of the platform of the 30S subunit by binding and bridging several RNA helices of the 16S rRNA. Forms an intersubunit bridge (bridge B4) with the 23S rRNA of the 50S subunit in the ribosome. In Photorhabdus luminescens (Xenorhabdus luminescens), this protein is Small ribosomal subunit protein uS15.